The sequence spans 405 residues: Arginine biosynthesis bifunctional protein ArgJ (405 aa).

Residues Thr152, Lys178, Thr189, Glu276, Asn400, and Thr405 each coordinate substrate. Catalysis depends on Thr189, which acts as the Nucleophile.

It belongs to the ArgJ family. In terms of assembly, heterotetramer of two alpha and two beta chains.

The protein resides in the cytoplasm. It carries out the reaction N(2)-acetyl-L-ornithine + L-glutamate = N-acetyl-L-glutamate + L-ornithine. It catalyses the reaction L-glutamate + acetyl-CoA = N-acetyl-L-glutamate + CoA + H(+). It participates in amino-acid biosynthesis; L-arginine biosynthesis; L-ornithine and N-acetyl-L-glutamate from L-glutamate and N(2)-acetyl-L-ornithine (cyclic): step 1/1. Its pathway is amino-acid biosynthesis; L-arginine biosynthesis; N(2)-acetyl-L-ornithine from L-glutamate: step 1/4. Catalyzes two activities which are involved in the cyclic version of arginine biosynthesis: the synthesis of N-acetylglutamate from glutamate and acetyl-CoA as the acetyl donor, and of ornithine by transacetylation between N(2)-acetylornithine and glutamate. The sequence is that of Arginine biosynthesis bifunctional protein ArgJ from Pseudomonas savastanoi pv. phaseolicola (strain 1448A / Race 6) (Pseudomonas syringae pv. phaseolicola (strain 1448A / Race 6)).